A 208-amino-acid chain; its full sequence is Ras-related protein M-Ras (208 aa).

GTP is bound by residues aspartate 21, glycine 22, glycine 23, valine 24, glycine 25, lysine 26, serine 27, alanine 28, phenylalanine 38, valine 39, proline 40, tyrosine 42, proline 44, and threonine 45. Serine 27 lines the Mg(2+) pocket. An Effector region motif is present at residues 42–50; sequence YDPTIEDSY. Mg(2+) is bound by residues threonine 45 and aspartate 67. GTP is bound by residues glycine 70, asparagine 126, lysine 127, aspartate 129, serine 156, alanine 157, and lysine 158. Cysteine 205 carries the post-translational modification Cysteine methyl ester. Residue cysteine 205 is the site of S-geranylgeranyl cysteine attachment. Residues 206 to 208 constitute a propeptide, removed in mature form; that stretch reads VIL.

The protein belongs to the small GTPase superfamily. Ras family. As to quaternary structure, component of the SHOC2-MRAS-PP1c (SMP) holophosphatase complex consisting of SHOC2, GTP-bound M-Ras/MRAS and the catalytic subunit of protein phosphatase 1 (either PPP1CA, PPP1CB or PPP1CC). Interacts (active GTP-bound form) with both SHOC2 and PP1c (all isoforms) to form a tertiary complex; SHOC2 and PP1c preferably bind M-Ras/MRAS, but they also bind K-Ras/KRAS, N-Ras/NRAS and H-Ras/HRAS. Interacts with RGL3. Interacts (active GTP-bound form preferentially) with RGS14. The cofactor is Mg(2+). As to expression, expression highly restricted to the brain and heart.

It localises to the cell membrane. The catalysed reaction is GTP + H2O = GDP + phosphate + H(+). Signal transducer in the Ras-MAPK signaling pathway that regulates cell proliferation and survival. Core component of the SHOC2-MRAS-PP1c (SMP) holophosphatase complex that regulates the MAPK pathway activation. The formation of the SMP complex only occurs when MRAS is GTP-bound. MRAS has low intrinsic GTPase activity and may require additional factors for activation. The SMP complex specifically dephosphorylates the inhibitory phosphorylation at 'Ser-259' of RAF1 kinase, 'Ser-365' of BRAF kinase and 'Ser-214' of ARAF kinase, stimulating their kinase activities. This Homo sapiens (Human) protein is Ras-related protein M-Ras (MRAS).